Consider the following 149-residue polypeptide: Deoxyuridine 5'-triphosphate nucleotidohydrolase (149 aa).

Substrate is bound by residues 68 to 70 (RSG), Asn81, and 85 to 87 (LID).

Belongs to the dUTPase family. Mg(2+) is required as a cofactor.

It carries out the reaction dUTP + H2O = dUMP + diphosphate + H(+). It participates in pyrimidine metabolism; dUMP biosynthesis; dUMP from dCTP (dUTP route): step 2/2. This enzyme is involved in nucleotide metabolism: it produces dUMP, the immediate precursor of thymidine nucleotides and it decreases the intracellular concentration of dUTP so that uracil cannot be incorporated into DNA. In Azoarcus sp. (strain BH72), this protein is Deoxyuridine 5'-triphosphate nucleotidohydrolase.